Reading from the N-terminus, the 265-residue chain is Dehydrin COR47 (265 aa).

Residues 1-14 (MAEEYKNNVPEHET) show a composition bias toward basic and acidic residues. The interval 1–265 (MAEEYKNNVP…EVKKEKESDD (265 aa)) is disordered. At Ala2 the chain carries N-acetylalanine. The segment covering 16–28 (TVATEESPATTTE) has biased composition (polar residues). The span at 29-47 (VTDRGLFDFLGKKEEEVKP) shows a compositional bias: basic and acidic residues. Ser64 is subject to Phosphoserine. Over residues 69 to 79 (AAEHEEVKENK) the composition is skewed to basic and acidic residues. Position 90 is a phosphothreonine (Thr90). 2 stretches are compositionally biased toward basic and acidic residues: residues 96-105 (NKPSVIEKLH) and 129-156 (IVEGEEDKKGLVEKIKEKLPGHHDKTAE). Repeat unit 1 spans residues 133-153 (EEDKKGLVEKIKEKLPGHHDK). Residues 133-251 (EEDKKGLVEK…KEKLPGYHAK (119 aa)) form a 3 X 21 AA repeats, Lys-rich region. Positions 160–172 (PVSTTIPVPVSES) are enriched in low complexity. Composition is skewed to basic and acidic residues over residues 173-204 (VVEHDHPEEEKKGLVEKIKEKLPGHHDEKAED) and 227-265 (PVEHPEEKKGILEKIKEKLPGYHAKTTEEEVKKEKESDD). 2 tandem repeats follow at residues 180 to 200 (EEEKKGLVEKIKEKLPGHHDE) and 231 to 251 (PEEKKGILEKIKEKLPGYHAK).

It belongs to the plant dehydrin family.

In Arabidopsis thaliana (Mouse-ear cress), this protein is Dehydrin COR47 (COR47).